Here is a 1466-residue protein sequence, read N- to C-terminus: Immediate-early protein 2 (1466 aa).

Disordered stretches follow at residues 1–21 (MEPA…MQDY), 223–242 (NRGY…GGNG), 339–370 (YNHP…RGNQ), 428–472 (RCRS…VTKA), 517–965 (RSKT…TSIN), 1005–1068 (FRPH…CRSN), 1086–1179 (SRTR…SENA), and 1191–1223 (TTSH…DSSI). Residues 339–350 (YNHPTKAQTIPE) are compositionally biased toward polar residues. Positions 428 to 437 (RCRSVQKKKE) are enriched in basic residues. 2 stretches are compositionally biased toward basic and acidic residues: residues 443–472 (NKHD…VTKA) and 536–553 (PTKD…DNYP). Composition is skewed to polar residues over residues 583-595 (KNVS…TSPK) and 640-665 (KNHT…PTAF). The segment covering 666 to 681 (NKSNNNKSITNSTSNS) has biased composition (low complexity). The segment covering 696 to 713 (NESKDPNRTCGKNSDKHL) has biased composition (basic and acidic residues). Composition is skewed to low complexity over residues 720–756 (ASKR…SSRA) and 763–772 (RASSRAPSRA). Basic and acidic residues predominate over residues 773–790 (SSRDSSRASSRDSSRDSN). Low complexity predominate over residues 791-800 (RASSKASSRA). Over residues 801-814 (SSRDSSRASSRDSS) the composition is skewed to basic and acidic residues. 2 stretches are compositionally biased toward low complexity: residues 826 to 884 (SRAS…SSRA) and 926 to 940 (SRAS…SSRA). Residues 955–965 (RQTPPHDTSIN) show a composition bias toward polar residues. Residues 989 to 1037 (ARLQCFNHNDQFYNPRFRPHIRTNRKKSESTNDTDSESSMSRCKSHCRN) are interaction with human UBE2I. 3 stretches are compositionally biased toward low complexity: residues 1019 to 1029 (TNDTDSESSMS), 1053 to 1068 (GSSS…CRSN), and 1086 to 1110 (SRTR…STLK). Over residues 1116–1131 (QNRDNKQIKSKSDSKH) the composition is skewed to basic and acidic residues. Residues 1162 to 1177 (HNSSPFNTHEQSNHSE) are compositionally biased toward polar residues. Residues 1195–1213 (LHQKQNVKLHNTKKCKKKR) show a composition bias toward basic residues.

The protein belongs to the herpesviridae IE2 family. In terms of assembly, interacts with human UBE2I in the nucleus. Although this interaction does not promote IE2 sumoylation, it represses transactivation activity.

The protein localises to the host nucleus. Its function is as follows. Transcriptional transactivator. This chain is Immediate-early protein 2 (U90/U86), found in Homo sapiens (Human).